The following is a 544-amino-acid chain: T-complex protein 1 subunit gamma (544 aa).

An intrachain disulfide couples C368 to C374. Residues 525 to 544 form a disordered region; the sequence is SKKRGGNEPTNPAAMAQGQE.

This sequence belongs to the TCP-1 chaperonin family. As to quaternary structure, heterooligomeric complex of about 850 to 900 kDa that forms two stacked rings, 12 to 16 nm in diameter.

The protein localises to the cytoplasm. Its function is as follows. Molecular chaperone; assists the folding of proteins upon ATP hydrolysis. Known to play a role, in vitro, in the folding of actin and tubulin. The chain is T-complex protein 1 subunit gamma from Drosophila melanogaster (Fruit fly).